The following is a 299-amino-acid chain: Homoserine kinase (299 aa).

Pro84–Ala94 contacts ATP.

It belongs to the GHMP kinase family. Homoserine kinase subfamily.

The protein localises to the cytoplasm. The enzyme catalyses L-homoserine + ATP = O-phospho-L-homoserine + ADP + H(+). Its pathway is amino-acid biosynthesis; L-threonine biosynthesis; L-threonine from L-aspartate: step 4/5. In terms of biological role, catalyzes the ATP-dependent phosphorylation of L-homoserine to L-homoserine phosphate. In Helicobacter hepaticus (strain ATCC 51449 / 3B1), this protein is Homoserine kinase.